A 509-amino-acid chain; its full sequence is tRNA-2-methylthio-N(6)-dimethylallyladenosine synthase (509 aa).

Residues 1–15 (MNEQQRLASQQANAS) are compositionally biased toward polar residues. The interval 1-22 (MNEQQRLASQQANASTKKEEKD) is disordered. The region spanning 66 to 184 (RKFYIRTYGC…LPYILKDAMF (119 aa)) is the MTTase N-terminal domain. Residues C75, C111, C145, C221, C225, and C228 each contribute to the [4Fe-4S] cluster site. The region spanning 207-437 (RRGDIKAWVN…NELVNEFSAK (231 aa)) is the Radical SAM core domain. Positions 440–503 (KKYEGQIVEV…TWSLNGELVE (64 aa)) constitute a TRAM domain.

This sequence belongs to the methylthiotransferase family. MiaB subfamily. In terms of assembly, monomer. The cofactor is [4Fe-4S] cluster.

It is found in the cytoplasm. It carries out the reaction N(6)-dimethylallyladenosine(37) in tRNA + (sulfur carrier)-SH + AH2 + 2 S-adenosyl-L-methionine = 2-methylsulfanyl-N(6)-dimethylallyladenosine(37) in tRNA + (sulfur carrier)-H + 5'-deoxyadenosine + L-methionine + A + S-adenosyl-L-homocysteine + 2 H(+). In terms of biological role, catalyzes the methylthiolation of N6-(dimethylallyl)adenosine (i(6)A), leading to the formation of 2-methylthio-N6-(dimethylallyl)adenosine (ms(2)i(6)A) at position 37 in tRNAs that read codons beginning with uridine. The sequence is that of tRNA-2-methylthio-N(6)-dimethylallyladenosine synthase from Bacillus cytotoxicus (strain DSM 22905 / CIP 110041 / 391-98 / NVH 391-98).